We begin with the raw amino-acid sequence, 436 residues long: GTPase Der (436 aa).

EngA-type G domains are found at residues P4–E167 and I175–N351. GTP is bound by residues G10–S17, D57–I61, N119–D122, G181–S188, D229–M233, and N294–D297. In terms of domain architecture, KH-like spans K352 to K436.

Belongs to the TRAFAC class TrmE-Era-EngA-EngB-Septin-like GTPase superfamily. EngA (Der) GTPase family. In terms of assembly, associates with the 50S ribosomal subunit.

Its function is as follows. GTPase that plays an essential role in the late steps of ribosome biogenesis. In Streptococcus pyogenes serotype M28 (strain MGAS6180), this protein is GTPase Der.